Reading from the N-terminus, the 664-residue chain is Protein SIEVE ELEMENT OCCLUSION C (664 aa).

The chain is Protein SIEVE ELEMENT OCCLUSION C from Arabidopsis thaliana (Mouse-ear cress).